The following is a 436-amino-acid chain: 3-ketoacyl-CoA thiolase (436 aa).

Catalysis depends on cysteine 99, which acts as the Acyl-thioester intermediate. Active-site proton acceptor residues include histidine 392 and cysteine 422.

Belongs to the thiolase-like superfamily. Thiolase family. As to quaternary structure, heterotetramer of two alpha chains (FadJ) and two beta chains (FadI).

The protein resides in the cytoplasm. It catalyses the reaction an acyl-CoA + acetyl-CoA = a 3-oxoacyl-CoA + CoA. It participates in lipid metabolism; fatty acid beta-oxidation. Functionally, catalyzes the final step of fatty acid oxidation in which acetyl-CoA is released and the CoA ester of a fatty acid two carbons shorter is formed. This is 3-ketoacyl-CoA thiolase from Citrobacter koseri (strain ATCC BAA-895 / CDC 4225-83 / SGSC4696).